Consider the following 450-residue polypeptide: Molybdate-anion transporter (450 aa).

The next 12 membrane-spanning stretches (helical) occupy residues 1-21 (MLVT…GLEL), 43-63 (LDFY…APYL), 79-99 (ILYV…SSLV), 128-148 (FVLL…FSAF), 174-194 (AAFW…AVAS), 195-215 (WIGL…ALAG), 249-269 (VLLL…FVFL), 278-298 (GAPL…GSSL), 311-331 (PMHL…MLTF), 344-364 (FIAF…MSFL), 376-396 (GVLN…LLVL), and 409-429 (FSIC…LFTV).

The protein belongs to the major facilitator superfamily.

It is found in the cell membrane. Its function is as follows. Mediates high-affinity intracellular uptake of the rare oligo-element molybdenum. The protein is Molybdate-anion transporter (MFSD5) of Pongo abelii (Sumatran orangutan).